A 218-amino-acid polypeptide reads, in one-letter code: Ribose-5-phosphate isomerase A (218 aa).

Substrate-binding positions include 28 to 31, 81 to 84, and 94 to 97; these read TGST, DSAD, and KGGG. Glu103 (proton acceptor) is an active-site residue. Lys121 contributes to the substrate binding site.

Belongs to the ribose 5-phosphate isomerase family. Homodimer.

It carries out the reaction aldehydo-D-ribose 5-phosphate = D-ribulose 5-phosphate. It participates in carbohydrate degradation; pentose phosphate pathway; D-ribose 5-phosphate from D-ribulose 5-phosphate (non-oxidative stage): step 1/1. Catalyzes the reversible conversion of ribose-5-phosphate to ribulose 5-phosphate. This chain is Ribose-5-phosphate isomerase A, found in Buchnera aphidicola subsp. Baizongia pistaciae (strain Bp).